The chain runs to 99 residues: Malonate decarboxylase acyl carrier protein (99 aa).

At serine 25 the chain carries O-(phosphoribosyl dephospho-coenzyme A)serine.

Post-translationally, covalently binds the prosthetic group of malonate decarboxylase.

It is found in the cytoplasm. Functionally, subunit of malonate decarboxylase, it is an acyl carrier protein to which acetyl and malonyl thioester residues are bound via a 2'-(5''-phosphoribosyl)-3'-dephospho-CoA prosthetic group and turn over during the catalytic mechanism. In Klebsiella pneumoniae, this protein is Malonate decarboxylase acyl carrier protein (mdcC).